We begin with the raw amino-acid sequence, 871 residues long: Scavenger receptor class F member 2 (871 aa).

Residues 1-20 are disordered; it reads MEGAGPRGAGPARRRGAGGP. The N-terminal stretch at 1-43 is a signal peptide; sequence MEGAGPRGAGPARRRGAGGPPSPLLPSLLLLLLLWMLPDTVAP. Topologically, residues 44-441 are extracellular; that stretch reads QELNPRGRNV…ACHLETNQRK (398 aa). 6 consecutive EGF-like domains span residues 71–110, 122–153, 148–182, 183–212, 213–241, and 236–270; these read QGDE…ANCD, CKEL…ARCE, WGAR…AQCA, SACY…RSCN, NQCA…ARCD, and FGAR…KYCR. 18 cysteine pairs are disulfide-bonded: cysteine 75/cysteine 86, cysteine 80/cysteine 98, cysteine 100/cysteine 109, cysteine 126/cysteine 134, cysteine 128/cysteine 141, cysteine 143/cysteine 152, cysteine 156/cysteine 163, cysteine 158/cysteine 170, cysteine 172/cysteine 181, cysteine 185/cysteine 193, cysteine 187/cysteine 200, cysteine 202/cysteine 211, cysteine 215/cysteine 222, cysteine 217/cysteine 229, cysteine 231/cysteine 240, cysteine 244/cysteine 251, cysteine 246/cysteine 258, and cysteine 260/cysteine 269. Asparagine 83 carries an N-linked (GlcNAc...) asparagine glycan. Asparagine 310 and asparagine 365 each carry an N-linked (GlcNAc...) asparagine glycan. The EGF-like 7 domain maps to 372 to 403; it reads CAFVCADCGSGHCDFQSGRCLCSPGVHGPHCN. 3 disulfide bridges follow: cysteine 376–cysteine 384, cysteine 379–cysteine 391, and cysteine 393–cysteine 402. N-linked (GlcNAc...) asparagine glycosylation occurs at asparagine 403. The chain crosses the membrane as a helical span at residues 442–462; sequence GVMGAGALLVLLVCLLLSLLG. Residues 463–871 lie on the Cytoplasmic side of the membrane; sequence CCCACRGKDP…ELGRAGAPTL (409 aa). At serine 551 the chain carries Phosphoserine. A compositionally biased stretch (basic and acidic residues) spans 570–579; the sequence is EAPAESRDPE. A disordered region spans residues 570-871; the sequence is EAPAESRDPE…ELGRAGAPTL (302 aa). At serine 613 the chain carries Phosphoserine. At tyrosine 628 the chain carries Phosphotyrosine. Over residues 632–643 the composition is skewed to basic and acidic residues; it reads ARREARPARARG. Phosphoserine occurs at positions 651, 653, 710, 718, and 742. Positions 705 to 725 are enriched in basic and acidic residues; the sequence is TPSDKSAHTVEHGSPRTRDPT. Low complexity predominate over residues 821–831; it reads PPATETPGPEK. Positions 844-856 are enriched in basic residues; the sequence is KKTPIQKPPRKKS. The span at 861–871 shows a compositional bias: low complexity; that stretch reads GELGRAGAPTL.

Homophilic and heterophilic interaction via its extracellular domain. Interacts with SCARF1. The heterophilic interaction with SCARF1, which is stronger than the homophilic interaction with itself, is suppressed by the presence of SCARF1 ligand such as Ac-LDL. As to expression, predominantly expressed in endothelial cells. Expressed in heart, placenta, lung, kidney, spleen, small intestine and ovary.

It is found in the membrane. Functionally, probable adhesion protein, which mediates homophilic and heterophilic interactions. In contrast to SCARF1, it poorly mediates the binding and degradation of acetylated low density lipoprotein (Ac-LDL). This is Scavenger receptor class F member 2 (SCARF2) from Homo sapiens (Human).